Reading from the N-terminus, the 611-residue chain is Homeobox protein BEL1 homolog (611 aa).

Disordered regions lie at residues 63 to 87, 101 to 133, 141 to 160, and 174 to 195; these read QIRM…DQNQ, VNND…NPTS, LRPQ…TQHQ, and SHHQ…FQIG. Residues 118–133 show a composition bias toward low complexity; that stretch reads PSQGLSLSLSSSNPTS. Residues 174-183 are compositionally biased toward low complexity; sequence SHHQNNNNNN. Residues 197–213 form an SR/KY domain region; that stretch reads SKYLSPAQELLSEFCSL. Positions 225–263 are disordered; it reads MKHKKKQKGKQQEEWDTSHHSNNDQHDQSATTSSKKHVP. Positions 234 to 251 are enriched in basic and acidic residues; sequence KQQEEWDTSHHSNNDQHD. The segment at 269-340 is BELL domain; it reads EFMELQKRKA…CLKDGLVGQI (72 aa). The Bipartite nuclear localization signature appears at 275-290; sequence KRKAKLLSMLEELKRR. The homeobox DNA-binding region spans 391–453; that stretch reads PWRPQRGLPE…NARVRLWKPM (63 aa).

Belongs to the TALE/BELL homeobox family. In terms of assembly, may form heterodimeric complexes with TALE/KNOX proteins STM, KNAT1/BP, KNAT2 and KNAT5. Interacts with AG-SEP1 and AG-SEP3 dimers. Interacts with KNATM, isoform KNATM-B. Interacts with BZIP30. In terms of tissue distribution, expressed in both floral and vegetative tissues.

The protein localises to the nucleus. Plays a major role in ovule patterning and in determination of integument identity via its interaction with MADS-box factors. Formation of complex with AG-SEP dimers negatively regulates the carpel identity process and favors the maintenance of ovule identity. BEL1-STM complex maintains the indeterminacy of the inflorescence meristem. Required, with SPL, for cytokinin-induced PIN1 expression in ovules. This chain is Homeobox protein BEL1 homolog (BEL1), found in Arabidopsis thaliana (Mouse-ear cress).